The sequence spans 160 residues: Large ribosomal subunit protein eL29 (160 aa).

Positions 1–26 (MAKSKNHTTHNQSRKWHRNGIKKPRS) are enriched in basic residues. Disordered regions lie at residues 1–34 (MAKS…SLKG) and 115–160 (RLCQ…VKAP). Position 5 is an N6-methyllysine (lysine 5). At serine 31 the chain carries Phosphoserine. Lysine 33 bears the N6-acetyllysine mark. Residues 126-160 (KAGAKAPAKAQASAPAQAPKGAQAPKGAQAPVKAP) are compositionally biased toward low complexity. A run of 2 repeats spans residues 127 to 134 (AGAKAPAK) and 135 to 142 (AQASAPAQ). Positions 127–142 (AGAKAPAKAQASAPAQ) are 2 X 8 AA tandem repeats of A-X-A-K-A-P-A-[KQ]. Serine 138 is modified (phosphoserine). Lysine 145 is modified (N6-acetyllysine).

The protein belongs to the eukaryotic ribosomal protein eL29 family. In terms of assembly, component of the large ribosomal subunit.

The protein resides in the cytoplasm. Component of the large ribosomal subunit. The ribosome is a large ribonucleoprotein complex responsible for the synthesis of proteins in the cell. This Mus musculus (Mouse) protein is Large ribosomal subunit protein eL29 (Rpl29).